Reading from the N-terminus, the 161-residue chain is Nucleotide-binding protein Ssed_3443 (161 aa).

The protein belongs to the YajQ family.

In terms of biological role, nucleotide-binding protein. This is Nucleotide-binding protein Ssed_3443 from Shewanella sediminis (strain HAW-EB3).